The following is a 287-amino-acid chain: Hydroxysteroid 11-beta-dehydrogenase 1-like protein (287 aa).

Positions 1 to 15 (MKVLLLTGLGALFFA) are cleaved as a signal peptide. NADP(+)-binding positions include 36 to 62 (GVSAGIGEELAYHYARLGSHLVLTAHT), 87 to 88 (DM), and 114 to 116 (NHL). A substrate-binding site is contributed by S165. Y178 functions as the Proton acceptor in the catalytic mechanism. Residues 178 to 182 (YSAAK) and 211 to 217 (GLRDRAS) contribute to the NADP(+) site. N280 is a glycosylation site (N-linked (GlcNAc...) asparagine).

The protein belongs to the short-chain dehydrogenases/reductases (SDR) family.

It is found in the secreted. It catalyses the reaction cortisone + NADPH + H(+) = cortisol + NADP(+). Unidirectional NADP(+)-dependent cortisol dehydrogenase (in vitro). The sequence is that of Hydroxysteroid 11-beta-dehydrogenase 1-like protein (HSD11B1L) from Bos taurus (Bovine).